The sequence spans 133 residues: Exosome complex protein C1739.07 (133 aa).

Positions 96–133 (VNPKTEAVNTSNAAISSSSSNRPKVAKDAATRIIKHHT) are disordered. Over residues 102–116 (AVNTSNAAISSSSSN) the composition is skewed to low complexity.

Belongs to the C1D family. Component of the exosome multienzyme ribonuclease complex. Interacts with cut3.

The protein resides in the cytoplasm. It localises to the nucleus. Its function is as follows. Required for exosome-dependent processing of pre-rRNA and small nucleolar RNA (snRNA) precursors. Involved in processing of 35S pre-rRNA at the A0, A1 and A2 sites. The chain is Exosome complex protein C1739.07 from Schizosaccharomyces pombe (strain 972 / ATCC 24843) (Fission yeast).